The sequence spans 135 residues: Holo-[acyl-carrier-protein] synthase (135 aa).

Residues D8 and E58 each contribute to the Mg(2+) site.

The protein belongs to the P-Pant transferase superfamily. AcpS family. Mg(2+) is required as a cofactor.

The protein resides in the cytoplasm. The catalysed reaction is apo-[ACP] + CoA = holo-[ACP] + adenosine 3',5'-bisphosphate + H(+). In terms of biological role, transfers the 4'-phosphopantetheine moiety from coenzyme A to a Ser of acyl-carrier-protein. This chain is Holo-[acyl-carrier-protein] synthase, found in Ligilactobacillus salivarius (strain UCC118) (Lactobacillus salivarius).